The sequence spans 467 residues: Peptidoglycan-N-acetylmuramic acid deacetylase PdaC (467 aa).

Residues 6-26 (IKWFHVLIAVVCVVGLIGFFH) form a helical membrane-spanning segment. The 175-residue stretch at 278 to 452 (KVIALTFDDG…KLTDQGYQLV (175 aa)) folds into the NodB homology domain. Catalysis depends on D285, which acts as the Proton acceptor. Residues D286, H336, and H340 each coordinate a divalent metal cation. H427 acts as the Proton donor in catalysis.

This sequence in the N-terminal section; belongs to the RsiV family. It in the C-terminal section; belongs to the polysaccharide deacetylase family.

It localises to the cell membrane. Its activity is regulated as follows. Activated by divalent metal cations; Mn(2+) is the most efficient, followed by Ca(2+) and Mg(2+). In contrast to PgdA from S.pneumoniae, these ions are not absolutely required for deacetylase activity. In terms of biological role, catalyzes the deacetylation of N-acetylmuramic acid (MurNAc) residues in peptidoglycan, a modification that confers resistance to lysosyme. Is not able to deacetylate N-acetylglucosamine (GlcNAc) residues in peptidoglycan, but can deacylate chitin oligomers such as GlcNAc4 and GlcNAc5. Is essentially not active toward chitosan (partially deacetylated GlcNAc polymer) and has very low activity toward chitin (GlcNAc polymer). Does not deacetylate GlcNAc. This is Peptidoglycan-N-acetylmuramic acid deacetylase PdaC (pdaC) from Bacillus subtilis (strain 168).